The primary structure comprises 228 residues: MATNEPEHEHRDEEEAGANEDEDTGAQVAPIVRLEEVAVTTGEEDEDAVLDLKSKLYRFDKDANQWKERGAGTVKFLKHKNTGKIRLVMRQSKTLKICANHFVKSGMSVQEHVGNEKSCVWHARDFADGELKDELFCIRFASIENCKTFMQKFKEVAESEEEKEESKDAADTAGLLEKLTVEETKTEEKTEAKAVETAKTEVKAEEKKESEAEKSGEAKKTEESGPST.

Basic and acidic residues predominate over residues 1 to 13 (MATNEPEHEHRDE). Disordered regions lie at residues 1 to 30 (MATNEPEHEHRDEEEAGANEDEDTGAQVAP) and 159 to 228 (SEEE…GPST). Over residues 14 to 24 (EEAGANEDEDT) the composition is skewed to acidic residues. The region spanning 27–162 (QVAPIVRLEE…FKEVAESEEE (136 aa)) is the RanBD1 domain. Over residues 179–228 (LTVEETKTEEKTEAKAVETAKTEVKAEEKKESEAEKSGEAKKTEESGPST) the composition is skewed to basic and acidic residues.

As to quaternary structure, interacts with the GTP-bound form of RAN1, RAN2 and RAN3. In terms of tissue distribution, ubiquitous. Preferentially expressed in root tips and gynoecium.

It is found in the nucleus. The protein localises to the nuclear pore complex. The polypeptide is Ran-binding protein 1 homolog a (RANBP1A) (Arabidopsis thaliana (Mouse-ear cress)).